A 232-amino-acid polypeptide reads, in one-letter code: Large ribosomal subunit protein uL1 (232 aa).

Belongs to the universal ribosomal protein uL1 family. Part of the 50S ribosomal subunit.

Binds directly to 23S rRNA. The L1 stalk is quite mobile in the ribosome, and is involved in E site tRNA release. Functionally, protein L1 is also a translational repressor protein, it controls the translation of the L11 operon by binding to its mRNA. This Rhizobium meliloti (strain 1021) (Ensifer meliloti) protein is Large ribosomal subunit protein uL1.